We begin with the raw amino-acid sequence, 161 residues long: Large ribosomal subunit protein uL10 (161 aa).

This sequence belongs to the universal ribosomal protein uL10 family. As to quaternary structure, part of the ribosomal stalk of the 50S ribosomal subunit. The N-terminus interacts with L11 and the large rRNA to form the base of the stalk. The C-terminus forms an elongated spine to which L12 dimers bind in a sequential fashion forming a multimeric L10(L12)X complex.

In terms of biological role, forms part of the ribosomal stalk, playing a central role in the interaction of the ribosome with GTP-bound translation factors. The protein is Large ribosomal subunit protein uL10 (rplJ) of Mycoplasma pneumoniae (strain ATCC 29342 / M129 / Subtype 1) (Mycoplasmoides pneumoniae).